We begin with the raw amino-acid sequence, 640 residues long: RNA polymerase II elongation factor ELL2 (640 aa).

Disordered regions lie at residues 172–202, 290–320, and 343–490; these read AVSDTVPERKRSTPMNPANTIRKTHSSSTIS, KLNPSQNAAGTSRSESPVCSSRDAVSSPQKR, and RVPP…EEDL. 2 stretches are compositionally biased toward polar residues: residues 184 to 202 and 291 to 318; these read TPMNPANTIRKTHSSSTIS and LNPSQNAAGTSRSESPVCSSRDAVSSPQ. Residues 360–372 are compositionally biased toward low complexity; sequence AAGLPLPPAAAAI. Residues 391–401 show a composition bias toward polar residues; it reads IVNSNSNSPST. The segment covering 457–470 has biased composition (basic residues); the sequence is MSHKKSKKKSKKHK. Residues 471-490 are compositionally biased toward basic and acidic residues; the sequence is EKDQIKKHDIETIEEKEEDL. Ser-503 and Ser-580 each carry phosphoserine. Positions 526 to 636 constitute an OCEL domain; sequence PDYLIKYIAI…LIGEFDQQQA (111 aa).

It belongs to the ELL/occludin family. In terms of assembly, component of the super elongation complex (SEC), at least composed of EAF1, EAF2, CDK9, MLLT3/AF9, AFF (AFF1 or AFF4), the P-TEFb complex and ELL (ELL, ELL2 or ELL3). Component of the little elongation complex (LEC), at least composed of ELL (ELL, ELL2 or ELL3), ZC3H8, ICE1 and ICE2. Interacts with AFF4; the interaction is direct and leads to stabilize ELL2 and prevent ELL2 ubiquitination. Interacts with EAF1 and EAF2. In terms of processing, ubiquitinated by SIAH1, leading to its degradation by the proteasome. Interaction with AFF4 stabilizes ELL2 and prevents ELL2 ubiquitination.

The protein localises to the nucleus. Elongation factor component of the super elongation complex (SEC), a complex required to increase the catalytic rate of RNA polymerase II transcription by suppressing transient pausing by the polymerase at multiple sites along the DNA. Component of the little elongation complex (LEC), a complex required to regulate small nuclear RNA (snRNA) gene transcription by RNA polymerase II and III. Plays a role in immunoglobulin secretion in plasma cells: directs efficient alternative mRNA processing, influencing both proximal poly(A) site choice and exon skipping, as well as immunoglobulin heavy chain (IgH) alternative processing. Probably acts by regulating histone modifications accompanying transition from membrane-specific to secretory IgH mRNA expression. The sequence is that of RNA polymerase II elongation factor ELL2 (ELL2) from Homo sapiens (Human).